We begin with the raw amino-acid sequence, 760 residues long: uncharacterized protein (760 aa).

A signal peptide spans 1 to 20 (MKFKLFLGSSFFGVATLLIA). Residue Cys21 is the site of N-palmitoyl cysteine attachment. The S-diacylglycerol cysteine moiety is linked to residue Cys21. Disordered stretches follow at residues 221-243 (ENAANGTTEKAEKTVSASSLQLK), 272-315 (AKTN…TSDD), and 705-741 (IKATSKEGEQNQGKKGDGAQNQGKKGDGAQNGKNDKA). The segment covering 272-284 (AKTNGEKGNEKQE) has biased composition (basic and acidic residues). The span at 300-312 (KNTSQDKTQNTQT) shows a compositional bias: polar residues. A compositionally biased stretch (basic and acidic residues) spans 705–721 (IKATSKEGEQNQGKKGD).

Belongs to the MG185/MG260 family.

It is found in the cell membrane. This is an uncharacterized protein from Mycoplasma pneumoniae (strain ATCC 29342 / M129 / Subtype 1) (Mycoplasmoides pneumoniae).